A 529-amino-acid polypeptide reads, in one-letter code: ATP synthase F(1) complex catalytic subunit beta, mitochondrial (529 aa).

Residues 1–46 constitute a mitochondrion transit peptide; the sequence is MLSLVGRVASASASGALRGLNPLAALPQAHLLLRTAPAGVHPARDY. Residue Ser-106 is glycosylated (O-linked (GlcNAc) serine). N6-acetyllysine; alternate occurs at positions 124, 133, and 161. An N6-succinyllysine; alternate mark is found at Lys-124, Lys-133, and Lys-161. Lys-198 bears the N6-acetyllysine mark. ADP-binding residues include Gly-209, Val-210, Gly-211, Lys-212, Thr-213, and Val-214. Residue Gly-209 participates in ATP binding. Phosphate is bound by residues Gly-209, Val-210, Gly-211, Lys-212, and Thr-213. The ATP site is built by Gly-211, Lys-212, Thr-213, and Val-214. Thr-213 serves as a coordination point for Mg(2+). Mg(2+) is bound at residue Glu-238. Arg-239 lines the ATP pocket. 2 positions are modified to N6-acetyllysine; alternate: Lys-259 and Lys-264. Lys-259 and Lys-264 each carry N6-succinyllysine; alternate. A Phosphothreonine modification is found at Thr-312. Phosphoserine is present on Ser-415. At Lys-426 the chain carries N6-acetyllysine. Ser-433 carries the post-translational modification Phosphoserine. N6-acetyllysine occurs at positions 480 and 485. An N6-acetyllysine; alternate modification is found at Lys-522. At Lys-522 the chain carries N6-succinyllysine; alternate. Position 529 is a phosphoserine (Ser-529).

The protein belongs to the ATPase alpha/beta chains family. As to quaternary structure, homotrimer. Component of the ATP synthase complex composed at least of ATP5F1A/subunit alpha, ATP5F1B/subunit beta, ATP5MC1/subunit c (homooctomer), MT-ATP6/subunit a, MT-ATP8/subunit 8, ATP5ME/subunit e, ATP5MF/subunit f, ATP5MG/subunit g, ATP5MK/subunit k, ATP5MJ/subunit j, ATP5F1C/subunit gamma, ATP5F1D/subunit delta, ATP5F1E/subunit epsilon, ATP5PF/subunit F6, ATP5PB/subunit b, ATP5PD/subunit d, ATP5PO/subunit OSCP. ATP synthase complex consists of a soluble F(1) head domain (subunits alpha(3) and beta(3)) - the catalytic core - and a membrane F(0) domain - the membrane proton channel (subunits c, a, 8, e, f, g, k and j). These two domains are linked by a central stalk (subunits gamma, delta, and epsilon) rotating inside the F1 region and a stationary peripheral stalk (subunits F6, b, d, and OSCP). Interacts with PPIF. Interacts with BCL2L1 isoform BCL-X(L); the interaction mediates the association of BCL2L1 isoform BCL-X(L) with the mitochondrial membrane F(1)F(0) ATP synthase and enhances neurons metabolic efficiency. Interacts with CLN5 and PPT1. Interacts with S100A1; this interaction increases F1-ATPase activity. Interacts with MTLN. Interacts with TTC5/STRAP; the interaction results in decreased mitochondrial ATP production.

It is found in the mitochondrion inner membrane. The catalysed reaction is ATP + H2O + 4 H(+)(in) = ADP + phosphate + 5 H(+)(out). Functionally, catalytic subunit beta, of the soluble F(1) head domain within the mitochondrial ATP synthase complex (F(1)F(0) ATP synthase or complex V) that produces ATP from ADP and phosphate inorganique in the presence of a proton gradient across the membrane which is generated by electron transport complexes of the respiratory chain. With the non-catalytic subunit alpha (ATP5F1A), forms the catalytic core in the F(1) domain. ATP synthase complex consist of two structural domains, F(1) - containing the extramembraneous catalytic core, and F(0) - containing the membrane proton channel, linked together by a central stalk and a peripheral stalk. During catalysis, ATP synthesis in the catalytic domain of F(1) is coupled via a rotary mechanism of the central stalk subunits to proton translocation. Catalytic subunit beta, of the mitochondrial membrane ATP synthase complex (F(1)F(0) ATP synthase or Complex V) that produces ATP from ADP in the presence of a proton gradient across the membrane which is generated by electron transport complexes of the respiratory chain. ATP synthase complex consist of a soluble F(1) head domain - the catalytic core - and a membrane F(1) domain - the membrane proton channel. These two domains are linked by a central stalk rotating inside the F(1) region and a stationary peripheral stalk. During catalysis, ATP synthesis in the catalytic domain of F(1) is coupled via a rotary mechanism of the central stalk subunits to proton translocation. In vivo, can only synthesize ATP although its ATP hydrolase activity can be activated artificially in vitro. With the subunit alpha (ATP5F1A), forms the catalytic core in the F(1) domain. The sequence is that of ATP synthase F(1) complex catalytic subunit beta, mitochondrial from Rattus norvegicus (Rat).